The sequence spans 70 residues: Large ribosomal subunit protein eL38 (70 aa).

Lys-4 participates in a covalent cross-link: Glycyl lysine isopeptide (Lys-Gly) (interchain with G-Cter in SUMO2). Lys-9 is modified (N6-acetyllysine; alternate). A Glycyl lysine isopeptide (Lys-Gly) (interchain with G-Cter in SUMO2); alternate cross-link involves residue Lys-9. Lys-67 carries the N6-acetyllysine modification.

Belongs to the eukaryotic ribosomal protein eL38 family. Component of the large ribosomal subunit.

Its subcellular location is the cytoplasm. Functionally, component of the large ribosomal subunit. The ribosome is a large ribonucleoprotein complex responsible for the synthesis of proteins in the cell. The polypeptide is Large ribosomal subunit protein eL38 (RPL38) (Homo sapiens (Human)).